The primary structure comprises 152 residues: Endodeoxyribonuclease 1 (152 aa).

It catalyses the reaction Endonucleolytic cleavage to 5'-phosphooligonucleotide end-products.. Endodeoxyribonuclease I, which is expressed in the late stage, is necessary for T3 genetic recombination and the breakdown of host DNA. In the early stage of infection, T3 DNA replicates as a linear monomer. In the late stage, the T3 DNA replicates via linear concatemers several genomes in length. The gene 3 product has also been implicated in the maturation of these concatemers. The polypeptide is Endodeoxyribonuclease 1 (3) (Enterobacteria phage T3 (Bacteriophage T3)).